Reading from the N-terminus, the 1698-residue chain is Bromodomain adjacent to zinc finger domain protein 2A (1698 aa).

2 disordered regions span residues 240–262 (QSTP…QLPS) and 352–387 (VMQE…MTIE). Polar residues predominate over residues 377 to 387 (ENVSQDEMTIE). Residues 418–489 (IATPEQVCFP…EHFSFSPRMP (72 aa)) enclose the MBD domain. Disordered stretches follow at residues 524–550 (RGRP…PPKV) and 610–653 (EKEE…DRKL). The span at 528–540 (RNLEKAKAKEQKA) shows a compositional bias: basic and acidic residues. A DNA-binding region (a.T hook 1) is located at residues 541-553 (KRGRGRPPKVKMI). Positions 579-638 (VQLCKLKKKMRRKARNQEAKLEAAKKLKEIKEKEEKKQKIQKAKNQEKAKNQEKKRTRRQ) form a coiled coil. Residues 610-632 (EKEEKKQKIQKAKNQEKAKNQEK) are compositionally biased toward basic and acidic residues. The 66-residue stretch at 701 to 766 (SCAFSDCLTT…LQAAMINPGL (66 aa)) folds into the DDT domain. Disordered regions lie at residues 884–905 (ITTT…NDEL), 1013–1063 (SFGS…PLTN), 1088–1110 (TVLT…SEAT), and 1123–1149 (TPCR…TAAT). The segment covering 890 to 900 (SLRRRSERNAE) has biased composition (basic and acidic residues). 2 stretches are compositionally biased toward polar residues: residues 1023 to 1040 (HPRN…SCHC) and 1051 to 1063 (VTDQ…PLTN). Residues 1091–1108 (TPESSPPHSESTPIISSE) are compositionally biased toward low complexity. The span at 1124 to 1149 (PCRNHNQGLSTHSSNRLSPPSPTAAT) shows a compositional bias: polar residues. Positions 1204–1216 (EKRRGRRPSKLLK) form a DNA-binding region, a.T hook 3. The segment at 1476–1526 (KVTCLYCRKGDNDELLLLCDSCDRGCHTYCHRPRMNEIPEGDWFCPTCISL) adopts a PHD-type zinc-finger fold. The disordered stretch occupies residues 1549 to 1587 (FTEDSPSKPSRRREHPTASQFSPGESPASKKRRMGTRSQ). In terms of domain architecture, Bromo spans 1585–1689 (RSQSPDLTFC…KFYDARWEEF (105 aa)).

This sequence belongs to the WAL family. As to quaternary structure, component of the NoRC complex, at least composed of SMARCA5/SNF2H and BAZ2A/TIP5.

The protein localises to the nucleus. It localises to the nucleolus. Essential component of the NoRC (nucleolar remodeling complex) complex, a complex that mediates silencing of a fraction of rDNA by recruiting histone-modifying enzymes and DNA methyltransferases, leading to heterochromatin formation and transcriptional silencing. In the complex, it plays a central role by being recruited to rDNA and by targeting chromatin modifying enzymes such as HDAC1, leading to repress RNA polymerase I transcription. Recruited to rDNA via its interaction with TTF1 and its ability to recognize and bind histone H4 acetylated on 'Lys-16' (H4K16ac), leading to deacetylation of H4K5ac, H4K8ac, H4K12ac but not H4K16ac. Specifically binds pRNAs, 150-250 nucleotide RNAs that are complementary in sequence to the rDNA promoter; pRNA-binding is required for heterochromatin formation and rDNA silencing. This chain is Bromodomain adjacent to zinc finger domain protein 2A (baz2a), found in Xenopus laevis (African clawed frog).